The chain runs to 93 residues: Small ribosomal subunit protein uS19 (93 aa).

Belongs to the universal ribosomal protein uS19 family.

Functionally, protein S19 forms a complex with S13 that binds strongly to the 16S ribosomal RNA. The polypeptide is Small ribosomal subunit protein uS19 (Ehrlichia canis (strain Jake)).